Reading from the N-terminus, the 221-residue chain is Transmembrane emp24 domain-containing protein 3 (221 aa).

The N-terminal stretch at 1–30 (MGNEVPRASSFQMLMLLLLLLLLRAERLRG) is a signal peptide. Residues 31–184 (AELTFELPDN…RAEDLNSRVS (154 aa)) lie on the Lumenal side of the membrane. The GOLD domain occupies 42-124 (KQCFHEEVEQ…HKTVYFDFQV (83 aa)). Residue R103 is modified to Dimethylated arginine. A helical membrane pass occupies residues 185 to 205 (YWSVGETIALFVVSFSQVLLL). Residues 206–221 (KSFFTEKRPINRAVHS) are Cytoplasmic-facing. Positions 208-209 (FF) match the COPII vesicle coat-binding motif. The short motif at 208–221 (FFTEKRPINRAVHS) is the COPI vesicle coat-binding element.

It belongs to the EMP24/GP25L family. As to quaternary structure, monomer in endoplasmic reticulum, endoplasmic reticulum-Golgi intermediate compartment and cis-Golgi network. Interacts (via C-terminus) with COPG1; the interaction involves dimeric TMED3; however, there are conflicting reports on the interaction. Interacts with GORASP1 and GORASP2.

It is found in the endoplasmic reticulum-Golgi intermediate compartment membrane. It localises to the golgi apparatus. Its subcellular location is the cis-Golgi network membrane. The protein localises to the golgi stack membrane. The protein resides in the endoplasmic reticulum membrane. It is found in the cytoplasmic vesicle. It localises to the COPI-coated vesicle membrane. Its function is as follows. Potential role in vesicular protein trafficking, mainly in the early secretory pathway. Contributes to the coupled localization of TMED2 and TMED10 in the cis-Golgi network. This is Transmembrane emp24 domain-containing protein 3 (Tmed3) from Rattus norvegicus (Rat).